Reading from the N-terminus, the 643-residue chain is Conglutin alpha 2 (643 aa).

An N-terminal signal peptide occupies residues 1–22; the sequence is MAKPCLFSFSLCLLLLSSLCLA. Disulfide bonds link cysteine 31/cysteine 64 and cysteine 107/cysteine 464. The 226-residue stretch at 36–261 folds into the Cupin type-1 1 domain; sequence LNALEPDNRV…AFNVDEEIIN (226 aa). 3 disordered regions span residues 110 to 142, 190 to 243, and 285 to 458; these read TYEEAQQSQSSQDPRRRSSRSQSQEQEQQDSHQ, PRRF…VLSG, and PKSQ…SRNG. Residues 207-218 are compositionally biased toward low complexity; that stretch reads QEQQGQQREQQQ. Composition is skewed to basic and acidic residues over residues 228–237 and 298–313; these read HQQEQEEEGK and PRQRGQPERREERREE. Acidic residues predominate over residues 314–323; that stretch reads EKEEEEEEDE. 2 stretches are compositionally biased toward basic and acidic residues: residues 324–333 and 357–369; these read PRSRERYERQ and QEGRGQQREWERT. Positions 422–433 are enriched in basic residues; that stretch reads RGRHGGRGRRSG. Residues 470 to 616 enclose the Cupin type-1 2 domain; it reads ENIAKPSRAD…AFGLRLNQVS (147 aa). Polar residues predominate over residues 623–632; it reads NQGPLVSPQS. Residues 623–643 are disordered; that stretch reads NQGPLVSPQSESEDHTLPKVA. Residues 634 to 643 are compositionally biased toward basic and acidic residues; it reads SEDHTLPKVA.

This sequence belongs to the 11S seed storage protein (globulins) family. In terms of assembly, hexamer; each subunit is composed of an acidic and a basic chain derived from a single precursor and linked by a disulfide bond. Component of globulins complexes which accumulate in seeds.

Its function is as follows. Sulfur-rich seed storage protein. This protein found in the seeds of many leguminous and non-leguminous plants is the source of sulfur-containing amino acids in seed meals. The chain is Conglutin alpha 2 from Lupinus angustifolius (Narrow-leaved blue lupine).